The primary structure comprises 216 residues: uncharacterized protein (216 aa).

The region spanning 18–47 (PPDSPIEDRCGSCNICVDSCPTGALVQGGQ) is the 4Fe-4S ferredoxin-type domain. Positions 27, 30, 33, 37, 79, 82, and 86 each coordinate [4Fe-4S] cluster.

This is an uncharacterized protein from Geobacillus stearothermophilus (Bacillus stearothermophilus).